Here is a 176-residue protein sequence, read N- to C-terminus: Large ribosomal subunit protein uL6 (176 aa).

The segment covering 151 to 170 (RPPEPYKGKGVRYADEQVRR) has biased composition (basic and acidic residues). The segment at 151-176 (RPPEPYKGKGVRYADEQVRRKEAKKK) is disordered.

It belongs to the universal ribosomal protein uL6 family. In terms of assembly, part of the 50S ribosomal subunit.

Functionally, this protein binds to the 23S rRNA, and is important in its secondary structure. It is located near the subunit interface in the base of the L7/L12 stalk, and near the tRNA binding site of the peptidyltransferase center. The sequence is that of Large ribosomal subunit protein uL6 from Shewanella halifaxensis (strain HAW-EB4).